A 206-amino-acid polypeptide reads, in one-letter code: Heterochromatin protein 1 (206 aa).

Disordered regions lie at residues 1-24 (MGKKIDNPESSAKVSDAEEEEEEY) and 47-145 (GYPE…GFDR). 2 positions are modified to phosphoserine: S11 and S15. In terms of domain architecture, Chromo 1 spans 24–82 (YAVEKIIDRRVRKGKVEYYLKWKGYPETENTWEPENNLDCQDLIQQYEASRKDEEKSAA). Positions 50-60 (ETENTWEPENN) are enriched in low complexity. The segment covering 72–98 (ASRKDEEKSAASKKDRPSSSAKAKETQ) has biased composition (basic and acidic residues). The interval 95-206 (KETQGRASSS…RLSWYSDNED (112 aa)) is binds to Su(var)39. S102, S103, and S113 each carry phosphoserine. Phosphothreonine is present on residues T127, T128, and T134. The region spanning 147–205 (LEAEKILGASDNNGRLTFLIQFKGVDQAEMVPSSVANEKIPRMVIHFYEERLSWYSDNE) is the Chromo 2 domain.

In terms of assembly, homodimer. Probably associates with Su(var)3-9. Interacts with Mcm10. Interacts (via chromoshadow domain) with piwi (via N-terminal region). Interacts with Rrp6. Associates with and may be part of the HipHop-HOAP telomere capping complex but is not required for its stability or telomere localization. Interacts (via the chromo domain 2 (chromoshadow domain) and the hinge region between chromo domains 1 and 2) with cav/HOAP (via C-terminus); the interaction is direct. Each molecule of cav/HOAP interacts with 2 molecules of Su(var)205/HP1. Interacts with HipHop (via N-terminus). Interacts with moi/modigliani; the interaction is direct. Interacts (via chromo domain 1) with His3/histone 3 (via N-terminal tail methylated at 'Lys-10'); the interaction is direct. In terms of tissue distribution, salivary gland (at protein level).

It is found in the nucleus. The protein localises to the nucleoplasm. It localises to the chromosome. Its subcellular location is the telomere. Functionally, structural component of heterochromatin, involved in gene repression and the modification of position-effect-variegation. Recognizes and binds histone H3 tails methylated at 'Lys-9', leading to epigenetic repression. Stabilizes chromatin-associated RNAs probably by binding to them and thereby preventing their degradation. Associates with, and may be a part of, the HipHop-HOAP complex that recruits the MTV complex to form the terminin telomere-capping complex, which binds to chromosome ends in a sequence-independent manner and prevents telomere fusion. Telomere capping is independent of the origin recognition complex (ORC). The protein is Heterochromatin protein 1 of Drosophila melanogaster (Fruit fly).